A 285-amino-acid chain; its full sequence is Ribosomal RNA small subunit methyltransferase A (285 aa).

Positions 27, 29, 54, 75, 100, and 120 each coordinate S-adenosyl-L-methionine.

Belongs to the class I-like SAM-binding methyltransferase superfamily. rRNA adenine N(6)-methyltransferase family. RsmA subfamily.

The protein localises to the cytoplasm. The enzyme catalyses adenosine(1518)/adenosine(1519) in 16S rRNA + 4 S-adenosyl-L-methionine = N(6)-dimethyladenosine(1518)/N(6)-dimethyladenosine(1519) in 16S rRNA + 4 S-adenosyl-L-homocysteine + 4 H(+). In terms of biological role, specifically dimethylates two adjacent adenosines (A1518 and A1519) in the loop of a conserved hairpin near the 3'-end of 16S rRNA in the 30S particle. May play a critical role in biogenesis of 30S subunits. The polypeptide is Ribosomal RNA small subunit methyltransferase A (Phenylobacterium zucineum (strain HLK1)).